The primary structure comprises 83 residues: Small ribosomal subunit protein bS20 (83 aa).

The protein belongs to the bacterial ribosomal protein bS20 family.

Its function is as follows. Binds directly to 16S ribosomal RNA. This chain is Small ribosomal subunit protein bS20, found in Amoebophilus asiaticus (strain 5a2).